A 501-amino-acid polypeptide reads, in one-letter code: Ribose import ATP-binding protein RbsA (501 aa).

ABC transporter domains are found at residues 5–241 and 252–495; these read LQLK…VGRK and APGE…VGKL. 37–44 is an ATP binding site; the sequence is GENGAGKS.

It belongs to the ABC transporter superfamily. Ribose importer (TC 3.A.1.2.1) family. In terms of assembly, the complex is composed of an ATP-binding protein (RbsA), two transmembrane proteins (RbsC) and a solute-binding protein (RbsB).

The protein resides in the cell inner membrane. The catalysed reaction is D-ribose(out) + ATP + H2O = D-ribose(in) + ADP + phosphate + H(+). Functionally, part of the ABC transporter complex RbsABC involved in ribose import. Responsible for energy coupling to the transport system. This is Ribose import ATP-binding protein RbsA from Salmonella paratyphi A (strain ATCC 9150 / SARB42).